We begin with the raw amino-acid sequence, 520 residues long: Ribonuclease Y (520 aa).

Residues 4–24 (TVWILISILLATVGAVVGFFV) traverse the membrane as a helical segment. In terms of domain architecture, KH spans 210–273 (TVSVVNLPND…ETARIALDKL (64 aa)). The HD domain maps to 336–429 (VLKHSMEVAY…VAAADALSAA (94 aa)).

It belongs to the RNase Y family.

Its subcellular location is the cell membrane. Its function is as follows. Endoribonuclease that initiates mRNA decay. The sequence is that of Ribonuclease Y from Bacillus cereus (strain ZK / E33L).